A 409-amino-acid polypeptide reads, in one-letter code: MKRAHLFVVGVYLLSSCRAEEGLNFPTYDGKDRVVSLSEKNFKQILKKYDLLCLYYHAPVSADKVAQKQFQLKEIVLELVAQVLEHKEIGFVMVDAKKEAKLAKKLGFDEEGSLYILKGDRTIEFDGEFAADVLVEFLLDLIEDPVEIINSKLEVQAFERIEDHIKLIGFFKSADSEYYKAFEEAAEHFQPYIKFFATFDKGVAKKLSLKMNEVDFYEPFMDEPTPIPNKPYTEEELVEFVKEHQRPTLRRLRPEDMFETWEDDLNGIHIVPFAEKSDPDGYEFLEILKQVARDNTDNPDLSIVWIDPDDFPLLVAYWEKTFKIDLFKPQIGVVNVTDADSVWMEIPDDDDLPTAEELEDWIEDVLSGKINTEDDDNEDEDDDDDNDDDDDDNGNSDEEDNDDSDEDDE.

Residues 1–19 (MKRAHLFVVGVYLLSSCRA) form the signal peptide. A Phosphotyrosine modification is found at Tyr282. The N-linked (GlcNAc...) asparagine glycan is linked to Asn335. The segment at 364 to 409 (DVLSGKINTEDDDNEDEDDDDDNDDDDDDNGNSDEEDNDDSDEDDE) is disordered. The segment covering 373–409 (EDDDNEDEDDDDDNDDDDDDNGNSDEEDNDDSDEDDE) has biased composition (acidic residues).

The protein belongs to the calsequestrin family. Monomer, homodimer and homooligomer. Mostly monomeric in the absence of calcium. Forms higher oligomers in a calcium-dependent manner. Dimers associate to form tetramers, that then form linear homomer chains. Interacts with ASPH and TRDN. In terms of processing, phosphorylation in the C-terminus, probably by CK2, moderately increases calcium buffering capacity. N-glycosylated. As to expression, detected in heart muscle (at protein level).

It is found in the sarcoplasmic reticulum lumen. Calsequestrin is a high-capacity, moderate affinity, calcium-binding protein and thus acts as an internal calcium store in muscle. Calcium ions are bound by clusters of acidic residues at the protein surface, especially at the interface between subunits. Can bind around 60 Ca(2+) ions. Regulates the release of lumenal Ca(2+) via the calcium release channel RYR2; this plays an important role in triggering muscle contraction. Plays a role in excitation-contraction coupling in the heart and in regulating the rate of heart beats. The sequence is that of Calsequestrin-2 (CASQ2) from Oryctolagus cuniculus (Rabbit).